The chain runs to 87 residues: RNA-binding protein Hfq (87 aa).

Residues 9-68 (DPFLNALRRERIPVSIYLVNGIKLQGQIESFDQFVILLKNTVSQMVYKHAISTVVPARAV) form the Sm domain.

It belongs to the Hfq family. As to quaternary structure, homohexamer.

In terms of biological role, RNA chaperone that binds small regulatory RNA (sRNAs) and mRNAs to facilitate mRNA translational regulation in response to envelope stress, environmental stress and changes in metabolite concentrations. Also binds with high specificity to tRNAs. This is RNA-binding protein Hfq from Aeromonas salmonicida (strain A449).